The following is a 141-amino-acid chain: Hemoglobin subunit alpha-1/2 (141 aa).

The 141-residue stretch at 1–141 folds into the Globin domain; that stretch reads VLSPADKTNV…VSTVLTSKYR (141 aa). Residue serine 3 is modified to Phosphoserine. At lysine 7 the chain carries N6-succinyllysine. Residue threonine 8 is modified to Phosphothreonine. Lysine 11 is modified (N6-succinyllysine). Position 16 is an N6-acetyllysine; alternate (lysine 16). Residue lysine 16 is modified to N6-succinyllysine; alternate. Tyrosine 24 carries the phosphotyrosine modification. Residue serine 35 is modified to Phosphoserine. Lysine 40 bears the N6-succinyllysine mark. Serine 49 carries the post-translational modification Phosphoserine. Position 58 (histidine 58) interacts with O2. Histidine 87 serves as a coordination point for heme b. Position 102 is a phosphoserine (serine 102). Threonine 108 bears the Phosphothreonine mark. 2 positions are modified to phosphoserine: serine 124 and serine 131. A phosphothreonine mark is found at threonine 134 and threonine 137. Phosphoserine is present on serine 138.

This sequence belongs to the globin family. Heterotetramer of two alpha chains and two beta chains. Red blood cells.

In terms of biological role, involved in oxygen transport from the lung to the various peripheral tissues. The sequence is that of Hemoglobin subunit alpha-1/2 from Macaca sinica (Toque macaque).